A 274-amino-acid chain; its full sequence is Putative phosphoenolpyruvate synthase regulatory protein (274 aa).

An ADP-binding site is contributed by 157 to 164; sequence GVSRCGKT.

It belongs to the pyruvate, phosphate/water dikinase regulatory protein family. PSRP subfamily.

It carries out the reaction [pyruvate, water dikinase] + ADP = [pyruvate, water dikinase]-phosphate + AMP + H(+). The enzyme catalyses [pyruvate, water dikinase]-phosphate + phosphate + H(+) = [pyruvate, water dikinase] + diphosphate. In terms of biological role, bifunctional serine/threonine kinase and phosphorylase involved in the regulation of the phosphoenolpyruvate synthase (PEPS) by catalyzing its phosphorylation/dephosphorylation. The polypeptide is Putative phosphoenolpyruvate synthase regulatory protein (Bordetella avium (strain 197N)).